The following is a 456-amino-acid chain: Alcohol acyltransferase 1 (456 aa).

Residues His166 and Asp382 each act as proton acceptor in the active site.

Belongs to the plant acyltransferase family.

In terms of biological role, involved in the biosynthesis of volatile esters which confer kiwifruit flavor. Alcohol acyl transferase that can use a wide range of alcohols as substrate to produce esters. The sequence is that of Alcohol acyltransferase 1 from Actinidia chinensis var. chinensis (Chinese soft-hair kiwi).